Reading from the N-terminus, the 451-residue chain is Methionine aminopeptidase 2-2 (451 aa).

The disordered stretch occupies residues M1–P97. The segment covering T19–P28 has biased composition (polar residues). The segment covering E35–G45 has biased composition (acidic residues). Positions K60–A73 are enriched in basic residues. The span at G74–S83 shows a compositional bias: low complexity. H204 contributes to the substrate binding site. A divalent metal cation-binding residues include D224, D235, and H304. A substrate-binding site is contributed by H312. 2 residues coordinate a divalent metal cation: E337 and E432.

The protein belongs to the peptidase M24A family. Methionine aminopeptidase eukaryotic type 2 subfamily. Requires Co(2+) as cofactor. It depends on Zn(2+) as a cofactor. Mn(2+) is required as a cofactor. The cofactor is Fe(2+).

It is found in the cytoplasm. It catalyses the reaction Release of N-terminal amino acids, preferentially methionine, from peptides and arylamides.. Its function is as follows. Cotranslationally removes the N-terminal methionine from nascent proteins. The N-terminal methionine is often cleaved when the second residue in the primary sequence is small and uncharged (Met-Ala-, Cys, Gly, Pro, Ser, Thr, or Val). This is Methionine aminopeptidase 2-2 from Leptosphaeria maculans (strain JN3 / isolate v23.1.3 / race Av1-4-5-6-7-8) (Blackleg fungus).